The following is a 252-amino-acid chain: Carbohydrate deacetylase (252 aa).

Residues histidine 59 and histidine 122 each coordinate Mg(2+).

This sequence belongs to the YdjC deacetylase family. Homodimer. Requires Mg(2+) as cofactor.

Its function is as follows. Probably catalyzes the deacetylation of acetylated carbohydrates an important step in the degradation of oligosaccharides. This Vibrio cholerae serotype O1 (strain ATCC 39541 / Classical Ogawa 395 / O395) protein is Carbohydrate deacetylase.